Here is a 559-residue protein sequence, read N- to C-terminus: MHEQYQAPLPVNSPALPEPFYYLHNFRAVLAWIGERYADLLDDQERAFIAAFAELPEASQALLVRMVMRKGTLFREGKLAYAEIGDTRAAVQPLLALGWVDAQPTLELAQLFGLLKKDELSQLFRDHLGRANLRKDALLERLQPLFPEARRLAEWQADFAEPVYELRCMALCDRLRLMYFGNLWQDWSEFVLADLGIYRYESVEFSADSRGFRLRADVDAYLHLFDCRQRFDLGEPLEELLAGLPGEPYANPWLEGRRVKLLFQFAQHCEKQRDFDLAQRLYRQSSHPGARLRAIRSLERGERFAEAHALAREASCAPESDAERQGLARLLPRLQGKLGLPRQARAAAPEIDRLDLCLAFPSEPCSVEWAVREHLEEPGCAVHYVENGLINSLFGLLCWEAIFAAIPGAFFHPFHSAPADLHSADFRQRRAALFEACLGRLEDGSYRDAIRCRYRDKFGLQSPFVYWELLGEELLEQALDCLPAAHLRAWFERLLEDIPGNRAGLPDLIQFWPAQRRYRMVEVKGPGDRLQDNQLRWLQFCREREMPVAVCYVRWHVDD.

Mn(2+)-binding residues include Glu386, Asp507, Glu522, and Val523. The region spanning 443-555 (DGSYRDAIRC…MPVAVCYVRW (113 aa)) is the VRR-NUC domain.

Belongs to the FAN1 family. The cofactor is Mn(2+). It depends on Mg(2+) as a cofactor.

It catalyses the reaction Hydrolytically removes 5'-nucleotides successively from the 3'-hydroxy termini of 3'-hydroxy-terminated oligonucleotides.. Its function is as follows. Nuclease required for the repair of DNA interstrand cross-links (ICL). Acts as a 5'-3' exonuclease that anchors at a cut end of DNA and cleaves DNA successively at every third nucleotide, allowing to excise an ICL from one strand through flanking incisions. Also has endonuclease activity toward 5'-flaps. This Pseudomonas aeruginosa (strain ATCC 15692 / DSM 22644 / CIP 104116 / JCM 14847 / LMG 12228 / 1C / PRS 101 / PAO1) protein is Fanconi-associated nuclease 1 homolog.